A 161-amino-acid chain; its full sequence is Nucleotide-binding protein Dtpsy_2240 (161 aa).

It belongs to the YajQ family.

In terms of biological role, nucleotide-binding protein. In Acidovorax ebreus (strain TPSY) (Diaphorobacter sp. (strain TPSY)), this protein is Nucleotide-binding protein Dtpsy_2240.